The following is a 201-amino-acid chain: Coiled-coil domain-containing protein 195 (201 aa).

Positions 4 to 38 (DIQLMRLIQEMRAEIHKLEKENQALRMKLTASSQR) form a coiled coil. Disordered stretches follow at residues 28 to 72 (LRMK…DAAP) and 179 to 201 (SKNS…IIAE). Over residues 179–188 (SKNSSSLKHS) the composition is skewed to low complexity. The segment covering 189–201 (PNQATNQLSIIAE) has biased composition (polar residues).

This is Coiled-coil domain-containing protein 195 from Homo sapiens (Human).